Consider the following 366-residue polypeptide: Peptide chain release factor 2 (366 aa).

Glutamine 251 carries the post-translational modification N5-methylglutamine.

It belongs to the prokaryotic/mitochondrial release factor family. Methylated by PrmC. Methylation increases the termination efficiency of RF2.

The protein localises to the cytoplasm. Functionally, peptide chain release factor 2 directs the termination of translation in response to the peptide chain termination codons UGA and UAA. The polypeptide is Peptide chain release factor 2 (prfB) (Listeria innocua serovar 6a (strain ATCC BAA-680 / CLIP 11262)).